The following is a 367-amino-acid chain: Alginate lyase (367 aa).

Positions 1-27 are cleaved as a signal peptide; the sequence is MKTSHLIRITLPGALAAALLASQVSQA. Residues 65 to 66, 138 to 139, and Tyr-256 each bind substrate; these read SK and HT.

The protein belongs to the polysaccharide lyase 5 family.

The protein resides in the periplasm. The catalysed reaction is Eliminative cleavage of alginate to give oligosaccharides with 4-deoxy-alpha-L-erythro-hex-4-enuronosyl groups at their non-reducing ends and beta-D-mannuronate at their reducing end.. Catalyzes the depolymerization of alginate by cleaving the beta-1,4 glycosidic bond between two adjacent sugar residues via a beta-elimination mechanism. May serve to degrade mislocalized alginate that is trapped in the periplasmic space. The sequence is that of Alginate lyase from Pseudomonas paraeruginosa (strain DSM 24068 / PA7) (Pseudomonas aeruginosa (strain PA7)).